We begin with the raw amino-acid sequence, 80 residues long: Translation initiation factor IF-1, chloroplastic (80 aa).

One can recognise an S1-like domain in the interval 1 to 72; sequence MKEHDLINME…TKGRILYRIR (72 aa).

This sequence belongs to the IF-1 family. In terms of assembly, component of the 30S ribosomal translation pre-initiation complex which assembles on the 30S ribosome in the order IF-2 and IF-3, IF-1 and N-formylmethionyl-tRNA(fMet); mRNA recruitment can occur at any time during PIC assembly.

Its subcellular location is the plastid. It localises to the chloroplast. Functionally, one of the essential components for the initiation of protein synthesis. Stabilizes the binding of IF-2 and IF-3 on the 30S subunit to which N-formylmethionyl-tRNA(fMet) subsequently binds. Helps modulate mRNA selection, yielding the 30S pre-initiation complex (PIC). Upon addition of the 50S ribosomal subunit IF-1, IF-2 and IF-3 are released leaving the mature 70S translation initiation complex. This Psilotum nudum (Whisk fern) protein is Translation initiation factor IF-1, chloroplastic.